The following is a 494-amino-acid chain: Glycogen synthase (494 aa).

K24 is a binding site for ADP-alpha-D-glucose.

The protein belongs to the glycosyltransferase 1 family. Bacterial/plant glycogen synthase subfamily.

The enzyme catalyses [(1-&gt;4)-alpha-D-glucosyl](n) + ADP-alpha-D-glucose = [(1-&gt;4)-alpha-D-glucosyl](n+1) + ADP + H(+). It functions in the pathway glycan biosynthesis; glycogen biosynthesis. Synthesizes alpha-1,4-glucan chains using ADP-glucose. The sequence is that of Glycogen synthase from Aromatoleum aromaticum (strain DSM 19018 / LMG 30748 / EbN1) (Azoarcus sp. (strain EbN1)).